The following is a 92-amino-acid chain: Endoribonuclease HigB (92 aa).

His-92 is a catalytic residue.

Forms a complex with the antitoxin HigA which inhibits the mRNA interferase activity. The heterodimer dimerizes to form a HigB-(HigA)2-HigB tetramer that is able to bind to the DNA.

Toxic component of a type II toxin-antitoxin (TA) system. A ribosome-associated translation-dependent mRNA interferase. Inhibits translation by sequence-specific cleavage of mRNA. Prefers either in-frame or out-of-frame 5'-AAA-3' codons (lysine). Also cleaves the first three AAAs of stretches of four or more A sequences. 20% of codons containing AA are cleaved and occassionally cuts even at a single A. In Proteus vulgaris, this protein is Endoribonuclease HigB.